Here is a 301-residue protein sequence, read N- to C-terminus: Transcriptional activator FeaR (301 aa).

One can recognise an HTH araC/xylS-type domain in the interval 199–299 (QKVVTLIDDN…GMTPGEYRRK (101 aa)). 2 consecutive DNA-binding regions (H-T-H motif) follow at residues 217–238 (EWIA…ADKG) and 266–289 (LAGI…KQRF).

Functionally, positive regulator of tynA/maoA and feaB/padA, the genes for 2-phenylethylamine catabolism. The protein is Transcriptional activator FeaR (feaR) of Escherichia coli (strain K12).